The chain runs to 346 residues: UPF0065 protein in the TAR-I ttuE-ttuC' intergenic region (346 aa).

The signal sequence occupies residues 1–46 (MQASMLDSQWRLTIFSPRRKVKVSQMNSRFIAVLLTATILPWVAQA).

Belongs to the UPF0065 (bug) family.

The protein resides in the periplasm. The sequence is that of UPF0065 protein in the TAR-I ttuE-ttuC' intergenic region from Agrobacterium vitis (Rhizobium vitis).